We begin with the raw amino-acid sequence, 154 residues long: Nuclear cap-binding protein subunit 2 (154 aa).

Residues Tyr-10, Tyr-33, 102–106 (RCDWD), 113–117 (RQYGR), and 123–124 (QV) contribute to the mRNA site. Residues 30 to 108 (STLYMGNLSF…RIIRCDWDAG (79 aa)) enclose the RRM domain.

Belongs to the RRM NCBP2 family. As to quaternary structure, component of the nuclear cap-binding complex (CBC), a heterodimer composed of Cbp80 and Cbp20 that interacts with m7GpppG-capped RNA.

It localises to the nucleus. Functionally, component of the cap-binding complex (CBC), which binds co-transcriptionally to the 5' cap of pre-mRNAs and is involved in various processes such as pre-mRNA splicing and RNA-mediated gene silencing (RNAi). The CBC complex is involved in miRNA-mediated RNA interference and is required for primary microRNAs (miRNAs) processing. Also involved in innate immunity via the short interfering RNAs (siRNAs) processing machinery by restricting the viral RNA production. In the CBC complex, Cbp20 recognizes and binds capped RNAs (m7GpppG-capped RNA) but requires Cbp80 to stabilize the movement of its N-terminal loop and lock the CBC into a high affinity cap-binding state with the cap structure. This Bombyx mori (Silk moth) protein is Nuclear cap-binding protein subunit 2.